Here is a 771-residue protein sequence, read N- to C-terminus: Chaperone protein dnaK3 (771 aa).

Thr198 is modified (phosphothreonine; by autocatalysis). The segment at 624 to 771 (FDDDDDYYNR…GWDDDDDDWF (148 aa)) is disordered. Composition is skewed to basic and acidic residues over residues 630-652 (YYNR…RYDD) and 708-734 (YDDR…RENA).

This sequence belongs to the heat shock protein 70 family.

Functionally, acts as a chaperone. This Synechocystis sp. (strain ATCC 27184 / PCC 6803 / Kazusa) protein is Chaperone protein dnaK3 (dnaK3).